A 425-amino-acid chain; its full sequence is Serine--tRNA ligase (425 aa).

230-232 (TAE) serves as a coordination point for L-serine. Residue 261-263 (RQE) coordinates ATP. Glu-284 contacts L-serine. An ATP-binding site is contributed by 348–351 (EISS). Ser-384 lines the L-serine pocket.

Belongs to the class-II aminoacyl-tRNA synthetase family. Type-1 seryl-tRNA synthetase subfamily. In terms of assembly, homodimer. The tRNA molecule binds across the dimer.

It is found in the cytoplasm. It catalyses the reaction tRNA(Ser) + L-serine + ATP = L-seryl-tRNA(Ser) + AMP + diphosphate + H(+). The catalysed reaction is tRNA(Sec) + L-serine + ATP = L-seryl-tRNA(Sec) + AMP + diphosphate + H(+). Its pathway is aminoacyl-tRNA biosynthesis; selenocysteinyl-tRNA(Sec) biosynthesis; L-seryl-tRNA(Sec) from L-serine and tRNA(Sec): step 1/1. Catalyzes the attachment of serine to tRNA(Ser). Is also able to aminoacylate tRNA(Sec) with serine, to form the misacylated tRNA L-seryl-tRNA(Sec), which will be further converted into selenocysteinyl-tRNA(Sec). The chain is Serine--tRNA ligase from Caldanaerobacter subterraneus subsp. tengcongensis (strain DSM 15242 / JCM 11007 / NBRC 100824 / MB4) (Thermoanaerobacter tengcongensis).